Consider the following 164-residue polypeptide: Protein-export protein SecB (164 aa).

The protein belongs to the SecB family. In terms of assembly, homotetramer, a dimer of dimers. One homotetramer interacts with 1 SecA dimer.

It is found in the cytoplasm. In terms of biological role, one of the proteins required for the normal export of preproteins out of the cell cytoplasm. It is a molecular chaperone that binds to a subset of precursor proteins, maintaining them in a translocation-competent state. It also specifically binds to its receptor SecA. In Chromohalobacter salexigens (strain ATCC BAA-138 / DSM 3043 / CIP 106854 / NCIMB 13768 / 1H11), this protein is Protein-export protein SecB.